Consider the following 488-residue polypeptide: Cruciferin (488 aa).

The N-terminal stretch at 1-23 is a signal peptide; that stretch reads MARLSSLLSFSLALLTFLHGSTA. Disulfide bonds link cysteine 30/cysteine 63 and cysteine 105/cysteine 305. Cupin type-1 domains are found at residues 35-262 and 311-460; these read LNAL…RTAQ and DNLD…EEAR. Residues 116-163 form a disordered region; the sequence is QPSGGSPFGEGQGQGQQGQGQGHQGQGQGQQGQQGQQGQQSQGQGFRD. Over residues 121-147 the composition is skewed to gly residues; sequence SPFGEGQGQGQQGQGQGHQGQGQGQQG. The span at 148–160 shows a compositional bias: low complexity; the sequence is QQGQQGQQSQGQG.

It belongs to the 11S seed storage protein (globulins) family. As to quaternary structure, hexamer; each subunit is composed of an acidic and a basic chain derived from a single precursor and linked by a disulfide bond.

It localises to the rough endoplasmic reticulum. In terms of biological role, this is a seed storage protein. The polypeptide is Cruciferin (CRUA) (Brassica napus (Rape)).